The chain runs to 184 residues: uncharacterized protein (184 aa).

This is an uncharacterized protein from Haemophilus influenzae (strain ATCC 51907 / DSM 11121 / KW20 / Rd).